The chain runs to 557 residues: Dihydroxy-acid dehydratase (557 aa).

A Mg(2+)-binding site is contributed by D78. C119 lines the [2Fe-2S] cluster pocket. 2 residues coordinate Mg(2+): D120 and K121. At K121 the chain carries N6-carboxylysine. A [2Fe-2S] cluster-binding site is contributed by C192. E443 contributes to the Mg(2+) binding site. S469 functions as the Proton acceptor in the catalytic mechanism.

It belongs to the IlvD/Edd family. Homodimer. Requires [2Fe-2S] cluster as cofactor. The cofactor is Mg(2+).

The catalysed reaction is (2R)-2,3-dihydroxy-3-methylbutanoate = 3-methyl-2-oxobutanoate + H2O. It catalyses the reaction (2R,3R)-2,3-dihydroxy-3-methylpentanoate = (S)-3-methyl-2-oxopentanoate + H2O. Its pathway is amino-acid biosynthesis; L-isoleucine biosynthesis; L-isoleucine from 2-oxobutanoate: step 3/4. It participates in amino-acid biosynthesis; L-valine biosynthesis; L-valine from pyruvate: step 3/4. Functionally, functions in the biosynthesis of branched-chain amino acids. Catalyzes the dehydration of (2R,3R)-2,3-dihydroxy-3-methylpentanoate (2,3-dihydroxy-3-methylvalerate) into 2-oxo-3-methylpentanoate (2-oxo-3-methylvalerate) and of (2R)-2,3-dihydroxy-3-methylbutanoate (2,3-dihydroxyisovalerate) into 2-oxo-3-methylbutanoate (2-oxoisovalerate), the penultimate precursor to L-isoleucine and L-valine, respectively. This chain is Dihydroxy-acid dehydratase, found in Persephonella marina (strain DSM 14350 / EX-H1).